Reading from the N-terminus, the 550-residue chain is Chaperonin GroEL (550 aa).

Residues 30–33 (TLGP), Lys-51, 87–91 (DGTTT), Gly-415, 479–481 (NAA), and Asp-495 each bind ATP.

This sequence belongs to the chaperonin (HSP60) family. Forms a cylinder of 14 subunits composed of two heptameric rings stacked back-to-back. Interacts with the co-chaperonin GroES.

The protein localises to the cytoplasm. It catalyses the reaction ATP + H2O + a folded polypeptide = ADP + phosphate + an unfolded polypeptide.. Together with its co-chaperonin GroES, plays an essential role in assisting protein folding. The GroEL-GroES system forms a nano-cage that allows encapsulation of the non-native substrate proteins and provides a physical environment optimized to promote and accelerate protein folding. In Aromatoleum aromaticum (strain DSM 19018 / LMG 30748 / EbN1) (Azoarcus sp. (strain EbN1)), this protein is Chaperonin GroEL.